A 273-amino-acid polypeptide reads, in one-letter code: uncharacterized protein (273 aa).

Basic residues predominate over residues 1–10 (MSSKKVKYNP). Disordered stretches follow at residues 1–32 (MSSK…FGFN) and 50–124 (EDVE…QSSP). Polar residues-rich tracts occupy residues 12 to 24 (KSAS…SASA), 55 to 64 (QSFNGKSSNL), and 92 to 124 (PQSS…QSSP). At Ser-123 the chain carries Phosphoserine.

It is found in the nucleus. Its subcellular location is the cytoplasm. The protein resides in the cytoskeleton. The protein localises to the spindle. This is an uncharacterized protein from Schizosaccharomyces pombe (strain 972 / ATCC 24843) (Fission yeast).